A 451-amino-acid chain; its full sequence is PTS system galactitol-specific EIIC component (451 aa).

Positions 6–435 (MRYILDLGPT…IYLTGIFMTW (430 aa)) constitute a PTS EIIC type-2 domain. The next 10 membrane-spanning stretches (helical) occupy residues 9–29 (ILDL…SKIL), 41–61 (LHIG…LDSI), 92–112 (ASQI…AMLL), 138–158 (LATG…AFVY), 218–238 (FGPF…IGIL), 305–325 (AVVS…VCVP), 329–349 (VLPF…VAVH), 357–377 (LISG…TIGL), 392–412 (GMVA…IQVF), and 415–435 (QNIP…FMTW).

In terms of assembly, forms a complex with one each of subunit of GatA, GatB and 2 subunits of GatC.

Its subcellular location is the cell inner membrane. In terms of biological role, the phosphoenolpyruvate-dependent sugar phosphotransferase system (PTS), a major carbohydrate active transport system, catalyzes the phosphorylation of incoming sugar substrates concomitant with their translocation across the cell membrane. The enzyme II complex composed of GatA, GatB and GatC is involved in galactitol transport. This Escherichia coli O157:H7 protein is PTS system galactitol-specific EIIC component (gatC).